The primary structure comprises 62 residues: Photosystem II reaction center X protein (62 aa).

Residues 26–46 (IASFFAAALLIVIPAAAFLIF) form a helical membrane-spanning segment.

This sequence belongs to the PsbX family. Type 2 subfamily. PSII consists of a core antenna complex that captures photons, and an electron transfer chain that converts photonic excitation into a charge separation. PSII forms dimeric complexes.

The protein resides in the cellular thylakoid membrane. In terms of biological role, involved in the binding and/or turnover of quinones at the Q(B) site of Photosystem II. The polypeptide is Photosystem II reaction center X protein (Prochlorococcus marinus subsp. pastoris (strain CCMP1986 / NIES-2087 / MED4)).